A 156-amino-acid polypeptide reads, in one-letter code: Small ribosomal subunit protein uS7 (156 aa).

Belongs to the universal ribosomal protein uS7 family. Part of the 30S ribosomal subunit. Contacts proteins S9 and S11.

Its function is as follows. One of the primary rRNA binding proteins, it binds directly to 16S rRNA where it nucleates assembly of the head domain of the 30S subunit. Is located at the subunit interface close to the decoding center, probably blocks exit of the E-site tRNA. In Shewanella sp. (strain W3-18-1), this protein is Small ribosomal subunit protein uS7.